A 196-amino-acid chain; its full sequence is Bcl-2-like protein 11 (196 aa).

A disordered region spans residues 1–68; that stretch reads MAKQPSDVNS…PLAPPASPGP (68 aa). The segment covering 34 to 43 has biased composition (polar residues); sequence TSLQTESQGN. The residue at position 65 (S65) is a Phosphoserine; by MAPK. S73, S83, and S90 each carry phosphoserine. The tract at residues 90–114 is disordered; it reads SGYFSFDTDRSPAPMSCDKSTQTPS. The short motif at 146-160 is the BH3 element; that stretch reads IAQELRRIGDEFNET.

The protein belongs to the Bcl-2 family. In terms of assembly, forms heterodimers with a number of antiapoptotic Bcl-2 proteins, including MCL1, BCL2, BCL2L1 isoform Bcl-X(L), BCL2A1/BFL-1, and BCL2L2/BCLW. Does not heterodimerize with proapoptotic proteins such as BAD, BOK or BAK. Identified in a complex containing BCL2L11, DYNLL1 and BCL2L1 isoform Bcl-X(L); BH3 integrity is required for BCL2L1-binding. Interacts with YWHAZ. When phosphorylated, interacts with TRIM2; this interaction is associated with ubiquitination and degradation. Interacts (via BH3) with MCL1; this interaction may sequester BCL2L11 and prevent its pro-apoptotic activity. When phosphorylated, isoform BimEL interacts with USP27X; this interaction leads to BCL2L11 deubiquitination and stabilization. Interacts with GIMAP5. Interacts with BCL2L10/BCL-B. In terms of processing, phosphorylation at Ser-65 by MAPK1/MAPK3 leads interaction with TRIM2 and ubiquitination, followed by proteasomal degradation. Deubiquitination catalyzed by USP27X stabilizes the protein. Post-translationally, ubiquitination by TRIM2 following phosphorylation by MAPK1/MAPK3 leads to proteasomal degradation. Conversely, deubiquitination catalyzed by USP27X stabilizes the protein. As to expression, widely expressed.

It localises to the membrane. The protein resides in the mitochondrion. In terms of biological role, induces apoptosis and anoikis. The polypeptide is Bcl-2-like protein 11 (Bcl2l11) (Rattus norvegicus (Rat)).